The following is a 304-amino-acid chain: tRNA pseudouridine synthase B (304 aa).

The active-site Nucleophile is Asp48.

The protein belongs to the pseudouridine synthase TruB family. Type 1 subfamily.

It catalyses the reaction uridine(55) in tRNA = pseudouridine(55) in tRNA. Its function is as follows. Responsible for synthesis of pseudouridine from uracil-55 in the psi GC loop of transfer RNAs. This Pseudomonas paraeruginosa (strain DSM 24068 / PA7) (Pseudomonas aeruginosa (strain PA7)) protein is tRNA pseudouridine synthase B.